The sequence spans 153 residues: uncharacterized protein (153 aa).

Disordered regions lie at residues 30 to 66 and 79 to 153; these read GPTVDTKRQELPILSEDSDGSDKEDEQPQVVVLRKGD and IKEN…DYDD. Residues 45-56 show a composition bias toward acidic residues; that stretch reads EDSDGSDKEDEQ. Composition is skewed to polar residues over residues 106–116 and 130–144; these read GDTTSGVNACS and GTKSSQKQVKNSSLL.

This is an uncharacterized protein from Xenopus laevis (African clawed frog).